Reading from the N-terminus, the 95-residue chain is MLNVNEYFAGKVKSIGYDSGSIGRASVGVMEKGEYTFTTDRPEEMTVVTGALRVLIPGAPDWQVFTPGETFFVPERSEFNLQVAEPSAYLCKYLS.

Belongs to the nucleoside phosphorylase PpnP family.

It carries out the reaction a purine D-ribonucleoside + phosphate = a purine nucleobase + alpha-D-ribose 1-phosphate. The enzyme catalyses adenosine + phosphate = alpha-D-ribose 1-phosphate + adenine. The catalysed reaction is cytidine + phosphate = cytosine + alpha-D-ribose 1-phosphate. It catalyses the reaction guanosine + phosphate = alpha-D-ribose 1-phosphate + guanine. It carries out the reaction inosine + phosphate = alpha-D-ribose 1-phosphate + hypoxanthine. The enzyme catalyses thymidine + phosphate = 2-deoxy-alpha-D-ribose 1-phosphate + thymine. The catalysed reaction is uridine + phosphate = alpha-D-ribose 1-phosphate + uracil. It catalyses the reaction xanthosine + phosphate = alpha-D-ribose 1-phosphate + xanthine. Functionally, catalyzes the phosphorolysis of diverse nucleosides, yielding D-ribose 1-phosphate and the respective free bases. Can use uridine, adenosine, guanosine, cytidine, thymidine, inosine and xanthosine as substrates. Also catalyzes the reverse reactions. The polypeptide is Pyrimidine/purine nucleoside phosphorylase (Edwardsiella ictaluri (strain 93-146)).